We begin with the raw amino-acid sequence, 206 residues long: Ras-related protein Ral-B (206 aa).

21-29 contacts GTP; that stretch reads GSGGVGKSA. Residues 43 to 51 carry the Effector region motif; that stretch reads YEPTKADSY. GTP contacts are provided by residues 68 to 72, 128 to 131, and 158 to 160; these read DTAGQ, NKSD, and SAK. The disordered stretch occupies residues 181–206; that stretch reads MSENKDKNGRKSGKSKKSFKERCCLL. A Cysteine methyl ester modification is found at Cys203. Cys203 carries S-geranylgeranyl cysteine lipidation. Positions 204–206 are cleaved as a propeptide — removed in mature form; that stretch reads CLL.

It belongs to the small GTPase superfamily. Ras family. Interacts with EXOC2/Sec5 and EXOC8/Exo84. Interacts (via effector domain) with RALBP1. In terms of processing, prenylation is essential for membrane localization. The farnesylated form confers resistance to the proapoptotic and anti-anchorage-dependent growth effects of some geranylgeranyltransferase I inhibitors.

The protein localises to the cell membrane. It localises to the midbody. It carries out the reaction GTP + H2O = GDP + phosphate + H(+). With respect to regulation, alternates between an inactive form bound to GDP and an active form bound to GTP. Activated by a guanine nucleotide-exchange factor (GEF) and inactivated by a GTPase-activating protein (GAP). Its function is as follows. Multifunctional GTPase involved in a variety of cellular processes including gene expression, cell migration, cell proliferation, oncogenic transformation and membrane trafficking. Accomplishes its multiple functions by interacting with distinct downstream effectors. Acts as a GTP sensor for GTP-dependent exocytosis of dense core vesicles. Required both to stabilize the assembly of the exocyst complex and to localize functional exocyst complexes to the leading edge of migrating cells. Required for suppression of apoptosis. In late stages of cytokinesis, upon completion of the bridge formation between dividing cells, mediates exocyst recruitment to the midbody to drive abscission. Involved in ligand-dependent receptor mediated endocytosis of the EGF and insulin receptors. This Rattus norvegicus (Rat) protein is Ras-related protein Ral-B (Ralb).